We begin with the raw amino-acid sequence, 260 residues long: UPF0246 protein Bcenmc03_2247 (260 aa).

It belongs to the UPF0246 family.

The protein is UPF0246 protein Bcenmc03_2247 of Burkholderia orbicola (strain MC0-3).